The primary structure comprises 460 residues: Cysteine--tRNA ligase (460 aa).

Cys28 contributes to the Zn(2+) binding site. Residues 30 to 40 (NTVYDFCHIGH) carry the 'HIGH' region motif. Cys209, His234, and Glu238 together coordinate Zn(2+). A 'KMSKS' region motif is present at residues 266 to 270 (KMSKS). Residue Lys269 coordinates ATP.

Belongs to the class-I aminoacyl-tRNA synthetase family. In terms of assembly, monomer. The cofactor is Zn(2+).

Its subcellular location is the cytoplasm. It catalyses the reaction tRNA(Cys) + L-cysteine + ATP = L-cysteinyl-tRNA(Cys) + AMP + diphosphate. The polypeptide is Cysteine--tRNA ligase (Marinomonas sp. (strain MWYL1)).